Here is a 413-residue protein sequence, read N- to C-terminus: Protein CDKN2AIP homolog B (413 aa).

The 98-residue stretch at 21 to 118 (LERVRGQCES…TTRDELVAKV (98 aa)) folds into the XRN2-binding (XTBD) domain. The segment at 118–266 (VKKRGNSSSN…PTRRFTTEHT (149 aa)) is disordered. Residues 183–193 (NKREAHSRTDV) show a composition bias toward basic and acidic residues.

This sequence belongs to the CARF family.

It localises to the nucleus. Its subcellular location is the nucleoplasm. Functionally, may regulate DNA damage response and cell proliferation. This is Protein CDKN2AIP homolog B (cdkn2aip-b) from Xenopus laevis (African clawed frog).